A 148-amino-acid polypeptide reads, in one-letter code: MAEIKSKVTLIGAMLARPGLEFIYEGELPACEQCKVRKACNNLKVGRKYRVLSIRATVHGCSVHLNGACAVEIVESPMVGLIKADLAIANSRILPDLSCTQSECKSYPLCHPDGVVSGERYMVSEVLGNAPDHCDKGRSLKLVELLPI.

The protein belongs to the UPF0179 family.

This chain is UPF0179 protein Mpal_0949, found in Methanosphaerula palustris (strain ATCC BAA-1556 / DSM 19958 / E1-9c).